We begin with the raw amino-acid sequence, 485 residues long: UDP-N-acetylmuramoyl-L-alanyl-D-glutamate--2,6-diaminopimelate ligase (485 aa).

Serine 30 lines the UDP-N-acetyl-alpha-D-muramoyl-L-alanyl-D-glutamate pocket. 113-119 serves as a coordination point for ATP; that stretch reads GTNGKTT. UDP-N-acetyl-alpha-D-muramoyl-L-alanyl-D-glutamate is bound by residues 155–156, serine 182, and arginine 190; that span reads TT. Lysine 222 bears the N6-carboxylysine mark. Residues arginine 381, 405–408, glycine 455, and glutamate 459 contribute to the meso-2,6-diaminopimelate site; that span reads DNPR. The Meso-diaminopimelate recognition motif signature appears at 405 to 408; it reads DNPR.

It belongs to the MurCDEF family. MurE subfamily. The cofactor is Mg(2+). Carboxylation is probably crucial for Mg(2+) binding and, consequently, for the gamma-phosphate positioning of ATP.

The protein localises to the cytoplasm. The enzyme catalyses UDP-N-acetyl-alpha-D-muramoyl-L-alanyl-D-glutamate + meso-2,6-diaminopimelate + ATP = UDP-N-acetyl-alpha-D-muramoyl-L-alanyl-gamma-D-glutamyl-meso-2,6-diaminopimelate + ADP + phosphate + H(+). It participates in cell wall biogenesis; peptidoglycan biosynthesis. Its function is as follows. Catalyzes the addition of meso-diaminopimelic acid to the nucleotide precursor UDP-N-acetylmuramoyl-L-alanyl-D-glutamate (UMAG) in the biosynthesis of bacterial cell-wall peptidoglycan. This Clostridium tetani (strain Massachusetts / E88) protein is UDP-N-acetylmuramoyl-L-alanyl-D-glutamate--2,6-diaminopimelate ligase.